A 139-amino-acid polypeptide reads, in one-letter code: Ribulose bisphosphate carboxylase small subunit (139 aa).

This sequence belongs to the RuBisCO small chain family. In terms of assembly, heterohexadecamer of 8 large and 8 small subunits.

The protein localises to the plastid. Its subcellular location is the chloroplast. Its function is as follows. RuBisCO catalyzes two reactions: the carboxylation of D-ribulose 1,5-bisphosphate, the primary event in carbon dioxide fixation, as well as the oxidative fragmentation of the pentose substrate in the photorespiration process. Both reactions occur simultaneously and in competition at the same active site. Although the small subunit is not catalytic it is essential for maximal activity. The polypeptide is Ribulose bisphosphate carboxylase small subunit (Thalassiosira nordenskioeldii (Marine diatom)).